The chain runs to 211 residues: Ubiquitin-conjugating enzyme E2 S (211 aa).

In terms of domain architecture, UBC core spans 11 to 157 (HVIRQVYKEV…ARLMTEIHAH (147 aa)). Cysteine 95 (glycyl thioester intermediate) is an active-site residue. Basic and acidic residues predominate over residues 157-167 (HSSSLRGKDPT). A disordered region spans residues 157–211 (HSSSLRGKDPTDPCSSASVTGALGDGPMAKKHAGDRDKKLAAKKKTDKKRALRRL). The span at 197 to 211 (AAKKKTDKKRALRRL) shows a compositional bias: basic residues.

The protein belongs to the ubiquitin-conjugating enzyme family.

It catalyses the reaction S-ubiquitinyl-[E1 ubiquitin-activating enzyme]-L-cysteine + [E2 ubiquitin-conjugating enzyme]-L-cysteine = [E1 ubiquitin-activating enzyme]-L-cysteine + S-ubiquitinyl-[E2 ubiquitin-conjugating enzyme]-L-cysteine.. It functions in the pathway protein modification; protein ubiquitination. Catalyzes the covalent attachment of ubiquitin to other proteins. Acts as an essential factor of the anaphase promoting complex/cyclosome (APC/C), a cell cycle-regulated ubiquitin ligase that controls progression through mitosis. Acts by specifically elongating 'Lys-11'-linked polyubiquitin chains initiated by the E2 enzyme ube2c/ubch10 on APC/C substrates, enhancing the degradation of APC/C substrates by the proteasome and promoting mitotic exit. This is Ubiquitin-conjugating enzyme E2 S (ube2s) from Aquarana catesbeiana (American bullfrog).